A 627-amino-acid chain; its full sequence is uncharacterized protein (627 aa).

Disordered stretches follow at residues 57–82 (EDAM…QGED), 96–121 (PEAQ…APPG), 160–184 (GCSH…DAAY), 198–232 (AQSQ…CPSG), 247–277 (SHDA…RGAP), 335–358 (RQAG…EAAY), and 449–579 (VFDV…PPLS). The span at 169-183 (SSSDQAADAPAGDAA) shows a compositional bias: low complexity. Low complexity predominate over residues 336 to 357 (QAGAEPAQAPATAPAPEGTEAA). Residues 450–464 (FDVKEQGAHADRDAA) are compositionally biased toward basic and acidic residues.

This is an uncharacterized protein from Treponema pallidum (strain Nichols).